The chain runs to 225 residues: NAD(P)H-quinone oxidoreductase subunit K, chloroplastic (225 aa).

Positions 43, 44, 108, and 139 each coordinate [4Fe-4S] cluster.

The protein belongs to the complex I 20 kDa subunit family. In terms of assembly, NDH is composed of at least 16 different subunits, 5 of which are encoded in the nucleus. [4Fe-4S] cluster is required as a cofactor.

The protein localises to the plastid. The protein resides in the chloroplast thylakoid membrane. The enzyme catalyses a plastoquinone + NADH + (n+1) H(+)(in) = a plastoquinol + NAD(+) + n H(+)(out). It carries out the reaction a plastoquinone + NADPH + (n+1) H(+)(in) = a plastoquinol + NADP(+) + n H(+)(out). In terms of biological role, NDH shuttles electrons from NAD(P)H:plastoquinone, via FMN and iron-sulfur (Fe-S) centers, to quinones in the photosynthetic chain and possibly in a chloroplast respiratory chain. The immediate electron acceptor for the enzyme in this species is believed to be plastoquinone. Couples the redox reaction to proton translocation, and thus conserves the redox energy in a proton gradient. This Daucus carota (Wild carrot) protein is NAD(P)H-quinone oxidoreductase subunit K, chloroplastic.